Consider the following 264-residue polypeptide: Versicolorin reductase stcU (264 aa).

NADP(+) contacts are provided by isoleucine 23, aspartate 69, asparagine 96, and arginine 129. Catalysis depends on proton donor residues serine 145 and serine 146. NADP(+)-binding residues include tyrosine 160, lysine 164, isoleucine 193, and threonine 195. The active-site Proton acceptor is tyrosine 160. The active-site Lowers pKa of active site Tyr is the lysine 164.

Belongs to the short-chain dehydrogenases/reductases (SDR) family.

The enzyme catalyses (4S,8R)-2,13,16,20-tetrahydroxy-7,9-dioxapentacyclo[10.8.0.0(3,10).0(4,8).0(14,19)]icosa-1(12),2,5,10,13,16,19-heptaen-18-one + NADPH + H(+) = (4S,8R,16R)-2,13,16,20-tetrahydroxy-7,9-dioxapentacyclo[10.8.0.0(3,10).0(4,8).0(14,19)]icosa-1(12),2,5,10,13,19-hexaen-18-one + NADP(+). It participates in mycotoxin biosynthesis; sterigmatocystin biosynthesis. Versicolorin reductase; part of the gene cluster that mediates the biosynthesis of sterigmatocystin (ST), a polyketide-derived furanocoumarin which is part of the most toxic and carcinogenic compounds among the known mycotoxins. The first step in the biosynthesis of sterigmatocystin is the production of hexanoate by the fatty acid synthase (FAS) units stcJ and stcK. The polyketide backbone is assembled by the non-reducing polyketide synthase stcA by condensation of the starter hexanoyl-CoA and 7 malonyl-CoA extender units followed by cyclization and release of norsolorinic acid. Norsolorinic acid is the first stable intermediate in the biosynthesis of sterigmatocystin and is converted into averantin (AVN) by the ketoreductase stcE which reduces the hexanoate ketone to an alcohol. Averantin is then oxidized into 5'-hydroxyaverantin (HAVN) by the cytochrome P450 monooxygenase stcF. 5'-hydroxyaverantin is further converted to 5'-oxyaverantin (OAVN) by the 5'-hydroxyaverantin dehydrogenase stcG. The next step is the conversion of OAVN into averufin (AVF) which is catalyzed by a yet to be identified enzyme. The cytochrome P450 monooxygenase stcB and the flavin-binding monooxygenase stcW are both required for the conversion of averufin to 1-hydroxyversicolorone. The esterase stcI probably catalyzes the formation of versiconal hemiacetal acetate from 1-hydroxyversicolorone. The oxydoreductase stcN then probably catalyzes the biosynthetic step from versiconal to versicolorin B (VERB). The next step is performed by the versicolorin B desaturase stcL to produce versicolorin A (VERA). The ketoreductase stcU and the cytochrome P450 monooxygenase stcS are involved in the conversion of versicolorin A to demethylsterigmatocystin. The Baeyer-Villiger oxidas stcQ and the reductase stcR might be involved in the biosynthetic step from versicolorin A to demethylsterigmatocystin. The final step in the biosynthesis of sterigmatocystin is the methylation of demethylsterigmatocystin catalyzed by the methyltransferase stcP. In Emericella nidulans (strain FGSC A4 / ATCC 38163 / CBS 112.46 / NRRL 194 / M139) (Aspergillus nidulans), this protein is Versicolorin reductase stcU.